The chain runs to 1311 residues: Suppressor of presenilin protein 4 (1311 aa).

A compositionally biased stretch (polar residues) spans 1-11 (MSSEPTSSIES). Disordered regions lie at residues 1–58 (MSSE…DDLN) and 75–95 (MFEDDEEDTVSRRRTRRSTAH). C2H2-type zinc fingers lie at residues 112–134 (HACHKCPSRYESKSSLANHTKMH) and 141–163 (FACELCDFSASTLKSLTHHNNIH). The tract at residues 226–304 (EFDTTPPPIL…PPPVRKDVEK (79 aa)) is disordered. The segment covering 280–293 (SPKGSLPSSSASSV) has biased composition (low complexity). 4 C2H2-type zinc fingers span residues 327 to 349 (QRCPHCPFTTSTVTRLNRHSGGH), 355 to 379 (YICPSENCNFMCRKAGFLQKHYILH), 451 to 476 (KKCNIGECEFLTQTLTQLIVHKVKTH), and 487 to 510 (FLCLTCGHRAKSYAALRTHKLIEH). The tract at residues 544 to 563 (VKEEPKEADGDESGDESFDS) is disordered. Residues 552-561 (DGDESGDESF) show a composition bias toward acidic residues. 6 C2H2-type zinc fingers span residues 585–607 (FCCNMCPYKAPTMNRCQRHYDKH), 613–635 (FKCQYCSWSSRSKEVIVNHEKLH), 709–731 (FQCTDCPYTSKYRGDMRSHKKRH), 737–759 (YRCVQCTYTTNRPVSLKDHLKQH), 794–816 (YCCDKCPYVTLALGCLWRHHRNH), and 823–845 (NICSNCSYSSIDQRKMEEHTIIH). A disordered region spans residues 865 to 1002 (RPVSSLTDLN…ESPEPDESVE (138 aa)). Positions 874-897 (NSEKMNERKSTKRKMLDKVEKMEV) are enriched in basic and acidic residues. The segment covering 898–907 (GEDEEDDEES) has biased composition (acidic residues). Residues 908 to 920 (VDKGTDDGDYKQR) show a composition bias toward basic and acidic residues. The span at 956–979 (NRINYSLLSKNGSGKPTPSTSSAN) shows a compositional bias: polar residues. 6 consecutive C2H2-type zinc fingers follow at residues 1022–1044 (LKCPDCPYKSSEPDVLEKHRYYH), 1053–1075 (YACSDCTFNTYTPTALLQHLKLH), 1104–1126 (YYCKNCSFKTSIHRNFIEHSAYH), 1162–1184 (KYCKKCTFKCVSQSNFIEHLDRH), 1190–1212 (YKCYSCDYSDNTKSVVDFHQLNH), and 1261–1284 (LKCPSCEYFCHVSSELAFHMSVHH).

In terms of tissue distribution, expressed in neurons.

The protein resides in the nucleus. In terms of biological role, probable transcriptional regulator, which participates in the transcriptional repression of the presenilin protein hop-1. Might play a role in the oxidative stress response. This is Suppressor of presenilin protein 4 (spr-4) from Caenorhabditis elegans.